The sequence spans 646 residues: MIKITFPDGNVKEFEAGVTTFEIAKSISPSLAKKTLAGKVNGKLIDATRAINEDSNFEIVTPDHEDALGILRHSAAHLFAQAAKRHFPDIHLGVGPAIQDGFYYDTDNEAGQISNDDLATIEAEMKKIVKENFKSERKEVSKEEAKEIFANDPYKLELIEEHNEDEGGLTIYTQGEYTDLCRGPHVPSTGVIKFFHLLNVAGAYWRGNSDNKMMQRIYGTAWFTKEELEENLKLREEAKERDHRKLGRELDLFFNDAELGAGTAYWLPAGATIRRIIERFVVDQEVKNGYQHVITPVMMNLNTYKQSGHWQHYHEDMYPPMDMGDGEEMELRPMNCPSHIAIYKHHVHSYRELPIRIAEFGMMHRYEKSGALSGLQRVREMTLNDGHTFVMLEQVQEEFSKILQLIMDMYRDFGINDYSFRLSYRDPKDTVKYFPDDEMWEKSQAMLKATMDDMNLDYVEAEGEAAFYGPKLDIQVKTALGNEETLSTIQLDFLNPENFDISYIGADGEKHRPVMIHRGVISTLERFIAYLIEVYKGAFPTWLAPTQATIIPVNNEIHADYAWKIQRELQDKGFRVVVDEANEKMGWKIRQSQTHKIPYQIVIGDQEQADGTVNIRRYGSKETKVIPLEEFIENISADVANFSRVD.

Residues 1–61 form the TGS domain; it reads MIKITFPDGN…NEDSNFEIVT (61 aa). Residues 242–540 form a catalytic region; sequence DHRKLGRELD…LIEVYKGAFP (299 aa). Cys-336, His-387, and His-517 together coordinate Zn(2+).

This sequence belongs to the class-II aminoacyl-tRNA synthetase family. As to quaternary structure, homodimer. Requires Zn(2+) as cofactor.

The protein localises to the cytoplasm. The enzyme catalyses tRNA(Thr) + L-threonine + ATP = L-threonyl-tRNA(Thr) + AMP + diphosphate + H(+). Catalyzes the attachment of threonine to tRNA(Thr) in a two-step reaction: L-threonine is first activated by ATP to form Thr-AMP and then transferred to the acceptor end of tRNA(Thr). Also edits incorrectly charged L-seryl-tRNA(Thr). This Lactococcus lactis subsp. lactis (strain IL1403) (Streptococcus lactis) protein is Threonine--tRNA ligase.